Consider the following 411-residue polypeptide: Secretion apparatus protein BsaZ (411 aa).

Transmembrane regions (helical) follow at residues 28-48 (IVALIVIATGALAAPALVDLT), 80-100 (IAAPFVLLCAAAGALPSLVQS), 137-157 (ALLYVGVFALTVRVFADLYHA), and 175-195 (IVLTVRLVLLFLLCALPVLIL). The interval 341 to 411 (AANRGGPPPE…APARTGDQNA (71 aa)) is disordered. The span at 370–404 (DACADNAFPDDAPPGAAAPNAGSPDSPAPDGGAPA) shows a compositional bias: low complexity.

It belongs to the type III secretion exporter family.

The protein resides in the cell membrane. Functionally, part of the bsa type III secretion system, is involved in the intracellular replication of invading bacteria inside the host cell. Probably necessary for the lysis of the vacuole membrane and escape into the host cell cytoplasm. The sequence is that of Secretion apparatus protein BsaZ (bsaZ) from Burkholderia pseudomallei (strain 1106a).